A 460-amino-acid polypeptide reads, in one-letter code: Proline--tRNA ligase (460 aa).

The protein belongs to the class-II aminoacyl-tRNA synthetase family. ProS type 3 subfamily. In terms of assembly, homodimer.

Its subcellular location is the cytoplasm. The catalysed reaction is tRNA(Pro) + L-proline + ATP = L-prolyl-tRNA(Pro) + AMP + diphosphate. Catalyzes the attachment of proline to tRNA(Pro) in a two-step reaction: proline is first activated by ATP to form Pro-AMP and then transferred to the acceptor end of tRNA(Pro). The sequence is that of Proline--tRNA ligase from Methanococcus maripaludis (strain C7 / ATCC BAA-1331).